A 317-amino-acid chain; its full sequence is tRNA(Ile)-lysidine synthase (317 aa).

30-35 (SGGSDS) contacts ATP.

The protein belongs to the tRNA(Ile)-lysidine synthase family.

It localises to the cytoplasm. It catalyses the reaction cytidine(34) in tRNA(Ile2) + L-lysine + ATP = lysidine(34) in tRNA(Ile2) + AMP + diphosphate + H(+). Ligates lysine onto the cytidine present at position 34 of the AUA codon-specific tRNA(Ile) that contains the anticodon CAU, in an ATP-dependent manner. Cytidine is converted to lysidine, thus changing the amino acid specificity of the tRNA from methionine to isoleucine. This chain is tRNA(Ile)-lysidine synthase, found in Chlamydia abortus (strain DSM 27085 / S26/3) (Chlamydophila abortus).